The primary structure comprises 459 residues: Cysteine--tRNA ligase (459 aa).

Position 28 (Cys-28) interacts with Zn(2+). A 'HIGH' region motif is present at residues 30–40 (VTVYDLCHIGH). Zn(2+) is bound by residues Cys-209, His-234, and Glu-238. The 'KMSKS' region signature appears at 266-270 (KMSKS). Lys-269 is a binding site for ATP.

The protein belongs to the class-I aminoacyl-tRNA synthetase family. In terms of assembly, monomer. It depends on Zn(2+) as a cofactor.

The protein resides in the cytoplasm. The enzyme catalyses tRNA(Cys) + L-cysteine + ATP = L-cysteinyl-tRNA(Cys) + AMP + diphosphate. The polypeptide is Cysteine--tRNA ligase (Haemophilus influenzae (strain PittGG)).